A 153-amino-acid chain; its full sequence is Ribosomal RNA large subunit methyltransferase H (153 aa).

Residues leucine 70, glycine 102, and 121–126 (LSAMTF) each bind S-adenosyl-L-methionine.

This sequence belongs to the RNA methyltransferase RlmH family. Homodimer.

It localises to the cytoplasm. It catalyses the reaction pseudouridine(1915) in 23S rRNA + S-adenosyl-L-methionine = N(3)-methylpseudouridine(1915) in 23S rRNA + S-adenosyl-L-homocysteine + H(+). Its function is as follows. Specifically methylates the pseudouridine at position 1915 (m3Psi1915) in 23S rRNA. In Trichlorobacter lovleyi (strain ATCC BAA-1151 / DSM 17278 / SZ) (Geobacter lovleyi), this protein is Ribosomal RNA large subunit methyltransferase H.